The following is a 957-amino-acid chain: SH3 domain-binding protein 4-A (957 aa).

An SH3 1 domain is found at 54–113 (ENVKEVVAIKDYCPNNFTTLKFSKGEHLYVLDASGGDWWYAHNSTEMGYIPSSYVQPLNY). The ZU5 domain maps to 312–449 (TSIVCRLDSS…LEPVMYVVMV (138 aa)). The region spanning 649–719 (TSLKYGKLLK…HAKNVLVVGK (71 aa)) is the SH3 2 domain.

In terms of assembly, homodimer or homooligomer.

Its subcellular location is the membrane. It localises to the clathrin-coated pit. It is found in the cytoplasmic vesicle. The protein localises to the clathrin-coated vesicle. The protein resides in the nucleus. Functionally, possible role in regulating endocytosis of the transferrin receptor at the plasma membrane. Alternatively, may function as a negative regulator of the amino acid-induced TOR signaling by inhibiting the formation of active Rag GTPase complexes. Preferentially binds inactive Rag GTPase complexes and prevents their interaction with the mTORC1 complex inhibiting its relocalization to lysosomes and its activation. Thereby, may indirectly regulate cell growth, proliferation and autophagy. The sequence is that of SH3 domain-binding protein 4-A (sh3bp4-a) from Xenopus laevis (African clawed frog).